Consider the following 847-residue polypeptide: Mitogen-activated protein kinase kinase kinase 11 (847 aa).

S11 carries the post-translational modification Phosphoserine. Residues 11–38 (SPLGSWNGSGSGGGGGGGGGRPEGSPKA) form a disordered region. Residues 17 to 32 (NGSGSGGGGGGGGGRP) are compositionally biased toward gly residues. S35 is modified (phosphoserine). One can recognise an SH3 domain in the interval 41-105 (YANPVWTALF…PSNYVSRGGG (65 aa)). In terms of domain architecture, Protein kinase spans 117–379 (LRLEEVIGIG…ASILQQLEAL (263 aa)). ATP-binding positions include 123-131 (IGIGGFGKV) and K144. D241 serves as the catalytic Proton acceptor. T277 bears the Phosphothreonine; by autocatalysis mark. A Phosphoserine; by autocatalysis and MAP4K1 modification is found at S281. The residue at position 394 (S394) is a Phosphoserine. 2 leucine-zipper regions span residues 403-424 (IQGLFDELRAKEKELLSREEEL) and 438-459 (LRRREHLLAQWELEVFERELTL). Residues S507, S524, S548, S555, and S556 each carry the phosphoserine modification. A disordered region spans residues 537-643 (PAEPGQAWGR…SSGTPKLIQR (107 aa)). Positions 550 to 562 (RRLEDSSNGERRA) are enriched in basic and acidic residues. The span at 597 to 609 (SSPLGSPSTPPAL) shows a compositional bias: low complexity. Phosphoserine is present on residues S654, S693, and S705. A disordered region spans residues 655 to 847 (LGLGRDLQPP…QAPWVPEAGP (193 aa)). Over residues 676–694 (TTPPTPTPAPCPTEPPPSP) the composition is skewed to pro residues. T708 carries the post-translational modification Phosphothreonine. 9 positions are modified to phosphoserine: S724, S727, S740, S748, S758, S770, S789, S793, and S815. Residues 760–773 (PLGLISRPRPSPLR) show a composition bias toward low complexity. A compositionally biased stretch (pro residues) spans 787–799 (RPSPLPSPQPAPR). Over residues 800-816 (RAPWTLFPDSDPFWDSP) the composition is skewed to low complexity.

It belongs to the protein kinase superfamily. STE Ser/Thr protein kinase family. MAP kinase kinase kinase subfamily. In terms of assembly, homodimer; undergoes dimerization during activation. Interacts with MAP2K4/MKK4. Interacts with MAP2K7/MKK7. Found in a complex with SH3RF1, RAC1, MAP2K7/MKK7, MAPK8IP1/JIP1 and MAPK8/JNK1. The cofactor is Mg(2+). Autophosphorylation on serine and threonine residues within the activation loop plays a role in enzyme activation. Thr-277 is likely to be the main autophosphorylation site. Phosphorylation of Ser-555 and Ser-556 is induced by CDC42. In terms of tissue distribution, expressed in a wide variety of normal and neoplastic tissues including fetal lung, liver, heart and kidney, and adult lung, liver, heart, kidney, placenta, skeletal muscle, pancreas and brain.

It localises to the cytoplasm. The protein resides in the cytoskeleton. The protein localises to the microtubule organizing center. Its subcellular location is the centrosome. It catalyses the reaction L-seryl-[protein] + ATP = O-phospho-L-seryl-[protein] + ADP + H(+). It carries out the reaction L-threonyl-[protein] + ATP = O-phospho-L-threonyl-[protein] + ADP + H(+). Its activity is regulated as follows. Homodimerization via the leucine zipper domains is required for autophosphorylation and subsequent activation. Functionally, activates the JUN N-terminal pathway. Required for serum-stimulated cell proliferation and for mitogen and cytokine activation of MAPK14 (p38), MAPK3 (ERK) and MAPK8 (JNK1) through phosphorylation and activation of MAP2K4/MKK4 and MAP2K7/MKK7. Plays a role in mitogen-stimulated phosphorylation and activation of BRAF, but does not phosphorylate BRAF directly. Influences microtubule organization during the cell cycle. The sequence is that of Mitogen-activated protein kinase kinase kinase 11 from Homo sapiens (Human).